An 86-amino-acid chain; its full sequence is Palustrin-3b (86 aa).

An N-terminal signal peptide occupies residues 1 to 22 (MFTLKKPLLLIVLLGIISLSLC). Positions 23 to 36 (EQERNADEDEESEI) are excised as a propeptide. Cysteines 81 and 86 form a disulfide.

In terms of tissue distribution, expressed by the skin glands.

It localises to the secreted. Functionally, antimicrobial peptide. This Odorrana versabilis (Chinese bamboo leaf odorous frog) protein is Palustrin-3b.